The primary structure comprises 418 residues: S-adenosylmethionine synthase (418 aa).

His16 contacts ATP. Residue Asp18 participates in Mg(2+) binding. Glu44 provides a ligand contact to K(+). Residues Glu57 and Gln100 each contribute to the L-methionine site. Residues 100 to 110 form a flexible loop region; the sequence is QSPDISQGVTK. Residues 175 to 177, 251 to 252, Asp260, 266 to 267, Ala283, and Lys287 contribute to the ATP site; these read DGK, KF, and RK. Asp260 serves as a coordination point for L-methionine. L-methionine is bound at residue Lys291.

Belongs to the AdoMet synthase family. In terms of assembly, homotetramer; dimer of dimers. It depends on Mg(2+) as a cofactor. Requires K(+) as cofactor.

The protein resides in the cytoplasm. The catalysed reaction is L-methionine + ATP + H2O = S-adenosyl-L-methionine + phosphate + diphosphate. The protein operates within amino-acid biosynthesis; S-adenosyl-L-methionine biosynthesis; S-adenosyl-L-methionine from L-methionine: step 1/1. Functionally, catalyzes the formation of S-adenosylmethionine (AdoMet) from methionine and ATP. The overall synthetic reaction is composed of two sequential steps, AdoMet formation and the subsequent tripolyphosphate hydrolysis which occurs prior to release of AdoMet from the enzyme. This Gloeothece citriformis (strain PCC 7424) (Cyanothece sp. (strain PCC 7424)) protein is S-adenosylmethionine synthase.